A 516-amino-acid chain; its full sequence is 3-phosphoshikimate 1-carboxyvinyltransferase, chloroplastic (516 aa).

Residues 1 to 72 (MAQINNMAQG…RISASVATAQ (72 aa)) constitute a chloroplast transit peptide. 3-phosphoshikimate contacts are provided by Lys95, Ser96, and Arg100. Lys95 contributes to the phosphoenolpyruvate binding site. Positions 173 and 203 each coordinate phosphoenolpyruvate. The 3-phosphoshikimate site is built by Ser250, Ser251, Gln252, Ser278, Asp403, and Lys430. Residue Gln252 participates in phosphoenolpyruvate binding. Catalysis depends on Asp403, which acts as the Proton acceptor. Positions 434, 476, and 501 each coordinate phosphoenolpyruvate.

The protein belongs to the EPSP synthase family. Mostly expressed in flower petals, and, to a lower extent, in roots, stems and anthers, but barely in leaves.

It is found in the plastid. The protein localises to the chloroplast. The catalysed reaction is 3-phosphoshikimate + phosphoenolpyruvate = 5-O-(1-carboxyvinyl)-3-phosphoshikimate + phosphate. It functions in the pathway metabolic intermediate biosynthesis; chorismate biosynthesis; chorismate from D-erythrose 4-phosphate and phosphoenolpyruvate: step 6/7. With respect to regulation, competitively inhibited by glyphosate. In terms of biological role, catalyzes the transfer of the enolpyruvyl moiety of phosphoenolpyruvate (PEP) to the 5-hydroxyl of shikimate-3-phosphate (S3P) to produce enolpyruvyl shikimate-3-phosphate and inorganic phosphate. Involved in the accumulation of volatile benzoides in flowers, scent attracting pollinators (e.g. the night-active hawkmoth pollinator Manduca sexta). The polypeptide is 3-phosphoshikimate 1-carboxyvinyltransferase, chloroplastic (Petunia hybrida (Petunia)).